The following is a 476-amino-acid chain: Ataxin-10 (476 aa).

Arg-10 carries the omega-N-methylarginine modification. Residues Ser-13 and Ser-78 each carry the phosphoserine modification. Phosphothreonine is present on Thr-83. Position 431 is a phosphoserine (Ser-431).

The protein belongs to the ataxin-10 family. In terms of assembly, homooligomer. Interacts with GNB2. Interacts with IQCB1. Interacts with OGT. In terms of processing, polyubiquitinated. Post-translationally, phosphorylation at Ser-13 by AURKB promotes the association of ATXN10 with PLK1. Phosphorylation at Ser-78 and Thr-83 by PLK1 may play a role in the regulation of cytokinesis and may stimulate the proteasome-mediated degradation of ATXN10.

The protein localises to the cytoplasm. It is found in the perinuclear region. The protein resides in the midbody. It localises to the cytoskeleton. Its subcellular location is the cilium basal body. The protein localises to the microtubule organizing center. It is found in the centrosome. The protein resides in the centriole. In terms of biological role, may play a role in the regulation of cytokinesis. May play a role in signaling by stimulating protein glycosylation. Induces neuritogenesis by activating the Ras-MAP kinase pathway and is necessary for the survival of cerebellar neurons. Does not appear to play a major role in ciliogenesis. The protein is Ataxin-10 (ATXN10) of Pongo abelii (Sumatran orangutan).